The chain runs to 268 residues: Tryptophan synthase alpha chain (268 aa).

Catalysis depends on proton acceptor residues E49 and D60.

Belongs to the TrpA family. Tetramer of two alpha and two beta chains.

It catalyses the reaction (1S,2R)-1-C-(indol-3-yl)glycerol 3-phosphate + L-serine = D-glyceraldehyde 3-phosphate + L-tryptophan + H2O. It participates in amino-acid biosynthesis; L-tryptophan biosynthesis; L-tryptophan from chorismate: step 5/5. Its function is as follows. The alpha subunit is responsible for the aldol cleavage of indoleglycerol phosphate to indole and glyceraldehyde 3-phosphate. This is Tryptophan synthase alpha chain from Xanthomonas euvesicatoria pv. vesicatoria (strain 85-10) (Xanthomonas campestris pv. vesicatoria).